Here is a 203-residue protein sequence, read N- to C-terminus: Thymidylate kinase (203 aa).

Residue 7–14 (GPDGSGKS) participates in ATP binding.

Belongs to the thymidylate kinase family.

The enzyme catalyses dTMP + ATP = dTDP + ADP. Functionally, phosphorylation of dTMP to form dTDP in both de novo and salvage pathways of dTTP synthesis. The chain is Thymidylate kinase from Finegoldia magna (strain ATCC 29328 / DSM 20472 / WAL 2508) (Peptostreptococcus magnus).